The following is a 259-amino-acid chain: Ribosomal RNA large subunit methyltransferase E (259 aa).

S-adenosyl-L-methionine contacts are provided by Gly49, Trp51, Asp69, Asp88, and Asp112. Residue Lys152 is the Proton acceptor of the active site. The region spanning 199–257 (PIAEGDEHTVEIVDTGDEGDGIARIEGYTLFVDDAAEGDTVDVTVTDLKPNYGFAERRD) is the TRAM domain.

The protein belongs to the class I-like SAM-binding methyltransferase superfamily. RNA methyltransferase RlmE family.

The protein localises to the cytoplasm. The enzyme catalyses uridine(2552) in 23S rRNA + S-adenosyl-L-methionine = 2'-O-methyluridine(2552) in 23S rRNA + S-adenosyl-L-homocysteine + H(+). Functionally, specifically methylates the uridine in position 2552 of 23S rRNA at the 2'-O position of the ribose in the fully assembled 50S ribosomal subunit. This is Ribosomal RNA large subunit methyltransferase E from Halobacterium salinarum (strain ATCC 29341 / DSM 671 / R1).